A 459-amino-acid polypeptide reads, in one-letter code: Sorting nexin-8 (459 aa).

Positions 1–37 are disordered; it reads MTGRAMDPLPSPAVAAAAEAEADEEADPPATGPRTSQ. Residues 68–176 form the PX domain; that stretch reads AKDTVQVELI…KLFLSFSGSD (109 aa). A 1,2-diacyl-sn-glycero-3-phospho-(1D-myo-inositol-3-phosphate) contacts are provided by R104, K130, and R143. T446 is modified (phosphothreonine). A Phosphoserine modification is found at S450.

This sequence belongs to the sorting nexin family.

It localises to the early endosome membrane. In terms of biological role, may be involved in several stages of intracellular trafficking. May play a role in intracellular protein transport from early endosomes to the trans-Golgi network. The chain is Sorting nexin-8 (Snx8) from Mus musculus (Mouse).